The sequence spans 284 residues: Pantothenate synthetase (284 aa).

Position 30-37 (30-37 (MGNLHDGH)) interacts with ATP. His37 acts as the Proton donor in catalysis. Gln61 contributes to the (R)-pantoate binding site. Position 61 (Gln61) interacts with beta-alanine. 149–152 (GEKD) lines the ATP pocket. Residue Gln155 coordinates (R)-pantoate. ATP contacts are provided by residues Ile178 and 186–189 (LSSR).

The protein belongs to the pantothenate synthetase family. Homodimer.

The protein resides in the cytoplasm. The catalysed reaction is (R)-pantoate + beta-alanine + ATP = (R)-pantothenate + AMP + diphosphate + H(+). It functions in the pathway cofactor biosynthesis; (R)-pantothenate biosynthesis; (R)-pantothenate from (R)-pantoate and beta-alanine: step 1/1. Catalyzes the condensation of pantoate with beta-alanine in an ATP-dependent reaction via a pantoyl-adenylate intermediate. The chain is Pantothenate synthetase from Salmonella heidelberg (strain SL476).